Consider the following 121-residue polypeptide: Phosphoribosyl-ATP pyrophosphatase (121 aa).

Belongs to the PRA-PH family.

The protein localises to the cytoplasm. The catalysed reaction is 1-(5-phospho-beta-D-ribosyl)-ATP + H2O = 1-(5-phospho-beta-D-ribosyl)-5'-AMP + diphosphate + H(+). It functions in the pathway amino-acid biosynthesis; L-histidine biosynthesis; L-histidine from 5-phospho-alpha-D-ribose 1-diphosphate: step 2/9. This is Phosphoribosyl-ATP pyrophosphatase from Burkholderia cenocepacia (strain ATCC BAA-245 / DSM 16553 / LMG 16656 / NCTC 13227 / J2315 / CF5610) (Burkholderia cepacia (strain J2315)).